Consider the following 105-residue polypeptide: Large ribosomal subunit protein bL21 (105 aa).

This sequence belongs to the bacterial ribosomal protein bL21 family. In terms of assembly, part of the 50S ribosomal subunit. Contacts protein L20.

Functionally, this protein binds to 23S rRNA in the presence of protein L20. The polypeptide is Large ribosomal subunit protein bL21 (Bacteroides fragilis (strain YCH46)).